The sequence spans 286 residues: Main hemagglutinin component type C (286 aa).

One copy of the 1-alpha repeat lies at 2–55 (SQTNANDLRNNEVFFISPSNNTNKVLDKISQSEVKLWNKLSGANQKWRLIYDTN). Ricin B-type lectin domains follow at residues 12–140 (NEVF…FKFS) and 180–284 (DSSR…WIIN). The 1-beta repeat unit spans residues 56-100 (KQAYKIKVMDNTSLILTWNAPLSSVSVKTDTNGDNQYWYLLQNYI). The 1-gamma repeat unit spans residues 101–148 (SRNVIIRNYMNPNLVLQYNIDDTLMVSTQTSSSNQFFKFSNCIYEALN). A 2-alpha repeat occupies 149–193 (NRNCKLQTQLNSDRFLSKNLNSQIIVLWQWFDSSRQKWIIEYNET). The segment at 167–183 (NLNSQIIVLWQWFDSSR) is sugar-binding site 1. The stretch at 194–239 (KSAYTLKCQENNRYLTWIQNSNNYVETYQSTDSLIQYWNINYLDND) is one 2-beta repeat. One copy of the 2-gamma repeat lies at 240–286 (ASKYILYNLQDTNRVLDVYNSQIANGTHVIVDSYHGNTNQQWIINLI). A sugar-binding site 2 region spans residues 256-279 (DVYNSQIANGTHVIVDSYHGNTNQ).

Botulinum toxins are produced as progenitor toxins of large molecular sizes of 12S (M toxin) and 16S (L toxin). M toxin consists of a non-toxic, non-hemagglutinin component (NTNHA) and the neurotoxin. L toxin consists of the M toxin and the 3 subcomponents of hemagglutinin (HA). HA is composed of subcomponents of 70, 33, and 17 kDa. The 70 kDa subcomponent undergoes proteolytic processing and is split into HA-55 (also called HA-53 and HA3b) and HA-22-23 (also called HA3a). The stoichiometry of the whole complex has been modeled as one BoNT/C, one NTNHA, three HA-70, six HA-33 and three HA-17.

Its subcellular location is the secreted. Agglutinates human erythrocytes. The hemagglutinin (HA) component of the progenitor toxin protects the structural integrity of botulinum neurotoxin; may increase internalization of the neurotoxin into the bloodstream of the host. The hemagglutinin (HA) component is involved in binding to the upper small intestine through interactions with glycolipids and glycoproteins containing sialic acid moieties. Binds galactose or oligosaccharides with galactose at their non-reducing end. Binds eukaryotic host mucins; binding is inhibited by N-acetyl-beta-neuraminic acid, N-acetyl-D-galactosamine, galactose, and methyl N-acetyl-beta-neuraminic acid. Binds N-acetyl-beta-neuraminic acid, N-acetyl-D-galactosamine and galactose (but not glucose) via 2 sites. The sequence is that of Main hemagglutinin component type C from Clostridium botulinum C (Clostridium botulinum C bacteriophage).